A 281-amino-acid polypeptide reads, in one-letter code: Tumor necrosis factor ligand superfamily member 10 (281 aa).

Topologically, residues 1–17 (MAMMEVQGGPSLGQTCV) are cytoplasmic. The chain crosses the membrane as a helical; Signal-anchor for type II membrane protein span at residues 18-38 (LIVIFTVLLQSLCVAVTYVYF). Residues 39–281 (TNELKQMQDK…ASFFGAFLVG (243 aa)) lie on the Extracellular side of the membrane. A THD domain is found at 122–280 (VAAHITGTRG…EASFFGAFLV (159 aa)). Positions 124-144 (AHITGTRGRSNTLSSPNSKNE) are disordered. The span at 130-141 (RGRSNTLSSPNS) shows a compositional bias: polar residues. Cys230 is a Zn(2+) binding site.

The protein belongs to the tumor necrosis factor family. As to quaternary structure, homotrimer. One TNFSF10 homotrimer interacts with three TNFSF10A mononers. One TNFSF10 homotrimer interacts with three TNFSF10B mononers. In terms of processing, tyrosine phosphorylated by PKDCC/VLK. Widespread; most predominant in spleen, lung and prostate.

It localises to the cell membrane. Its subcellular location is the secreted. Functionally, cytokine that binds to TNFRSF10A/TRAILR1, TNFRSF10B/TRAILR2, TNFRSF10C/TRAILR3, TNFRSF10D/TRAILR4 and possibly also to TNFRSF11B/OPG. Induces apoptosis. Its activity may be modulated by binding to the decoy receptors TNFRSF10C/TRAILR3, TNFRSF10D/TRAILR4 and TNFRSF11B/OPG that cannot induce apoptosis. The sequence is that of Tumor necrosis factor ligand superfamily member 10 (TNFSF10) from Homo sapiens (Human).